Here is a 122-residue protein sequence, read N- to C-terminus: Large ribosomal subunit protein uL14 (122 aa).

Belongs to the universal ribosomal protein uL14 family. As to quaternary structure, part of the 50S ribosomal subunit. Forms a cluster with proteins L3 and L19. In the 70S ribosome, L14 and L19 interact and together make contacts with the 16S rRNA in bridges B5 and B8.

In terms of biological role, binds to 23S rRNA. Forms part of two intersubunit bridges in the 70S ribosome. The protein is Large ribosomal subunit protein uL14 of Acinetobacter baumannii (strain SDF).